The primary structure comprises 349 residues: Isopentenyl-diphosphate delta-isomerase (349 aa).

Residue 7–8 (RK) participates in substrate binding. FMN is bound by residues Ser65, 66–68 (SMT), Ser96, and Asn124. 96–98 (SQR) lines the substrate pocket. Gln159 contributes to the substrate binding site. Position 160 (Glu160) interacts with Mg(2+). FMN-binding positions include Lys191, Thr221, 271–273 (GIR), and 292–293 (AA).

The protein belongs to the IPP isomerase type 2 family. As to quaternary structure, homooctamer. Dimer of tetramers. The cofactor is FMN. NADPH is required as a cofactor. Requires Mg(2+) as cofactor.

Its subcellular location is the cytoplasm. It catalyses the reaction isopentenyl diphosphate = dimethylallyl diphosphate. Functionally, involved in the biosynthesis of isoprenoids. Catalyzes the 1,3-allylic rearrangement of the homoallylic substrate isopentenyl (IPP) to its allylic isomer, dimethylallyl diphosphate (DMAPP). The sequence is that of Isopentenyl-diphosphate delta-isomerase from Synechocystis sp. (strain ATCC 27184 / PCC 6803 / Kazusa).